The following is a 537-amino-acid chain: DEAD-box ATP-dependent RNA helicase 5 (537 aa).

Positions 1–97 are disordered; that stretch reads MAGQKQELPV…EDLGEGESEQ (97 aa). Positions 22–80 form a coiled coil; sequence TNKKKKKSKKNKHTEENHEVEEVPQEVTNGVEEELSNKEKKKKRKREEKESEKNKKKDV. Residues 23 to 33 show a composition bias toward basic residues; the sequence is NKKKKKSKKNK. The span at 68–87 shows a compositional bias: basic and acidic residues; that stretch reads EEKESEKNKKKDVPEKKLEA. A Q motif motif is present at residues 116 to 142; the sequence is KTFAESNLPENVLDCCKTFEKPSPIQS. The region spanning 145–324 is the Helicase ATP-binding domain; that stretch reads WPFLLDGRDL…QEFMDPNPIK (180 aa). An ATP-binding site is contributed by 158–165; that stretch reads AKTGSGKT. Positions 272–275 match the DEAD box motif; that stretch reads DEAD. Positions 349–500 constitute a Helicase C-terminal domain; that stretch reads ARDQRLIALL…VVPADLLKFG (152 aa). S533 bears the Phosphoserine mark.

Belongs to the DEAD box helicase family. DDX5/DBP2 subfamily.

The protein resides in the nucleus. The protein localises to the nucleolus. It catalyses the reaction ATP + H2O = ADP + phosphate + H(+). Functionally, ATP-dependent RNA helicase required for 60S ribosomal subunit synthesis. Involved in efficient pre-rRNA processing, predominantly at site A3, which is necessary for the normal formation of 25S and 5.8S rRNAs. This chain is DEAD-box ATP-dependent RNA helicase 5 (RH5), found in Arabidopsis thaliana (Mouse-ear cress).